The chain runs to 694 residues: Transcription activator of gluconeogenesis Pc22g08580 (694 aa).

A disordered region spans residues 1–61 (MNMETKNGSP…DPSRPRRKKA (61 aa)). Residues 17 to 55 (SGERDSADITEHEQMDVKPKTNGDSKADRKAANAKDPSR) are compositionally biased toward basic and acidic residues. The zn(2)-C6 fungal-type DNA-binding region spans 65–93 (CFACQRAHLTCGDERPCQRCIKRGLQDAC). 3 disordered regions span residues 126–240 (TLRN…GPFF), 276–300 (AAGD…AQFS), and 552–582 (TGGS…GTGR). Positions 132 to 141 (PISRNGTNAV) are enriched in polar residues. A compositionally biased stretch (low complexity) spans 142–171 (NSNQQHSQQHPQQPTNPTNNNFYPTPQTQT). 3 stretches are compositionally biased toward polar residues: residues 172–234 (GSYN…SQNP), 281–300 (PTDS…AQFS), and 552–581 (TGGS…SGTG).

The protein belongs to the ERT1/acuK family.

The protein resides in the nucleus. Transcription factor which regulates nonfermentable carbon utilization. Activator of gluconeogenetic genes. The sequence is that of Transcription activator of gluconeogenesis Pc22g08580 from Penicillium rubens (strain ATCC 28089 / DSM 1075 / NRRL 1951 / Wisconsin 54-1255) (Penicillium chrysogenum).